A 212-amino-acid chain; its full sequence is Orotate phosphoribosyltransferase (212 aa).

5-phospho-alpha-D-ribose 1-diphosphate is bound by residues R95, K99, H101, and 121–129; that span reads DDLITTGGS. Position 125 (T125) interacts with orotate.

Belongs to the purine/pyrimidine phosphoribosyltransferase family. PyrE subfamily. In terms of assembly, homodimer. It depends on Mg(2+) as a cofactor.

The enzyme catalyses orotidine 5'-phosphate + diphosphate = orotate + 5-phospho-alpha-D-ribose 1-diphosphate. The protein operates within pyrimidine metabolism; UMP biosynthesis via de novo pathway; UMP from orotate: step 1/2. Catalyzes the transfer of a ribosyl phosphate group from 5-phosphoribose 1-diphosphate to orotate, leading to the formation of orotidine monophosphate (OMP). This is Orotate phosphoribosyltransferase from Lactobacillus johnsonii (strain CNCM I-12250 / La1 / NCC 533).